The chain runs to 1132 residues: Mis18-binding protein 1 (1132 aa).

A Glycyl lysine isopeptide (Lys-Gly) (interchain with G-Cter in SUMO2) cross-link involves residue Lys7. Ser9 is modified (phosphoserine). Lys65 is covalently cross-linked (Glycyl lysine isopeptide (Lys-Gly) (interchain with G-Cter in SUMO2)). Phosphoserine occurs at positions 110, 131, 135, 172, and 192. The disordered stretch occupies residues 123 to 154 (LRDKQEQPSRNSSLLEPQKSGNNETFTPNRVE). Over residues 130-150 (PSRNSSLLEPQKSGNNETFTP) the composition is skewed to polar residues. Residues Lys211 and Lys262 each participate in a glycyl lysine isopeptide (Lys-Gly) (interchain with G-Cter in SUMO2) cross-link. Ser299 bears the Phosphoserine mark. Positions 306–332 (SERTTEGTSQQKVKEGNGKTVPGETGL) are disordered. Position 365 is a phosphoserine (Ser365). In terms of domain architecture, SANTA spans 383–469 (VQLQEWMIKS…MFGFPENWKE (87 aa)). A disordered region spans residues 482 to 518 (EKNREKTKQKQKTGRSVRDIRKSMKNDARENQTDTAQ). A compositionally biased stretch (basic and acidic residues) spans 497 to 513 (SVRDIRKSMKNDARENQ). Glycyl lysine isopeptide (Lys-Gly) (interchain with G-Cter in SUMO2) cross-links involve residues Lys534, Lys612, Lys639, and Lys647. The residue at position 653 (Thr653) is a Phosphothreonine. Glycyl lysine isopeptide (Lys-Gly) (interchain with G-Cter in SUMO2) cross-links involve residues Lys727 and Lys742. Residues 765 to 798 (HQSSPDLSSEESETEKEIKRKAEVKKTKAGNTKE) are disordered. Phosphoserine is present on residues Ser772 and Ser773. Residues 779–790 (EKEIKRKAEVKK) are compositionally biased toward basic and acidic residues. At Thr821 the chain carries Phosphothreonine. Position 824 is a phosphoserine (Ser824). Lys840 is covalently cross-linked (Glycyl lysine isopeptide (Lys-Gly) (interchain with G-Cter in SUMO2)). Ser860 is modified (phosphoserine). The region spanning 875 to 930 (IQDKEWNEKELQKLHCAFASLPKHKPGFWSEVAAAVGSRSPEECQRKYMENPRGKG) is the SANT domain. Lys899 participates in a covalent cross-link: Glycyl lysine isopeptide (Lys-Gly) (interchain with G-Cter in SUMO2). The interval 923 to 957 (MENPRGKGSQKHVTKKKPANSKGQNGKRGDADQKQ) is disordered. Positions 930 to 941 (GSQKHVTKKKPA) are enriched in basic residues. Glycyl lysine isopeptide (Lys-Gly) (interchain with G-Cter in SUMO2) cross-links involve residues Lys956, Lys964, and Lys983. Position 1008 is a phosphoserine (Ser1008). Lys1079 participates in a covalent cross-link: Glycyl lysine isopeptide (Lys-Gly) (interchain with G-Cter in SUMO2). Residue Ser1086 is modified to Phosphoserine. Phosphothreonine is present on residues Thr1087 and Thr1089. Ser1104 and Ser1116 each carry phosphoserine.

As to quaternary structure, interacts with SP1. Interacts with MIS18A. Identified in a complex containing MIS18A, OIP5/MIS18B, MIS18BP1, RBBP7 and RBBP4. Interacts with KAT7/HBO1. Interacts (via N-terminus) with FLNA (via N-terminus).

Its subcellular location is the nucleus. The protein resides in the chromosome. It is found in the centromere. Functionally, required for recruitment of CENPA to centromeres and normal chromosome segregation during mitosis. The sequence is that of Mis18-binding protein 1 (MIS18BP1) from Homo sapiens (Human).